The following is a 427-amino-acid chain: Serine hydroxymethyltransferase (427 aa).

(6S)-5,6,7,8-tetrahydrofolate is bound at residue 120 to 122; it reads GHI. Lys-226 carries the post-translational modification N6-(pyridoxal phosphate)lysine. Glu-243 contacts (6S)-5,6,7,8-tetrahydrofolate.

It belongs to the SHMT family. As to quaternary structure, homodimer. The cofactor is pyridoxal 5'-phosphate.

It is found in the cytoplasm. It participates in amino-acid biosynthesis; glycine biosynthesis; glycine from L-serine: step 1/1. Catalyzes the reversible interconversion of serine and glycine with a modified folate serving as the one-carbon carrier. Also exhibits a pteridine-independent aldolase activity toward beta-hydroxyamino acids, producing glycine and aldehydes, via a retro-aldol mechanism. The sequence is that of Serine hydroxymethyltransferase from Thermococcus gammatolerans (strain DSM 15229 / JCM 11827 / EJ3).